A 695-amino-acid polypeptide reads, in one-letter code: UvrABC system protein C (695 aa).

Residues 1–10 (MNHDPAETRD) show a composition bias toward basic and acidic residues. The segment at 1-44 (MNHDPAETRDTAAAPLADTESPSPVSPELTPHPAPAAQDIDTAT) is disordered. In terms of domain architecture, GIY-YIG spans 88–166 (TSPGVYRMLN…IKQLRPRFNV (79 aa)). The UVR domain occupies 276–311 (RAVKQELAVEMEKASNELEFETAALYRDRLAALSAI).

The protein belongs to the UvrC family. As to quaternary structure, interacts with UvrB in an incision complex.

It is found in the cytoplasm. Functionally, the UvrABC repair system catalyzes the recognition and processing of DNA lesions. UvrC both incises the 5' and 3' sides of the lesion. The N-terminal half is responsible for the 3' incision and the C-terminal half is responsible for the 5' incision. The chain is UvrABC system protein C from Rhodopseudomonas palustris (strain HaA2).